The primary structure comprises 181 residues: ATP-dependent protease subunit HslV (181 aa).

Residue threonine 9 is part of the active site. Alanine 166, cysteine 169, and threonine 172 together coordinate Na(+).

It belongs to the peptidase T1B family. HslV subfamily. As to quaternary structure, a double ring-shaped homohexamer of HslV is capped on each side by a ring-shaped HslU homohexamer. The assembly of the HslU/HslV complex is dependent on binding of ATP.

It is found in the cytoplasm. The enzyme catalyses ATP-dependent cleavage of peptide bonds with broad specificity.. With respect to regulation, allosterically activated by HslU binding. Protease subunit of a proteasome-like degradation complex believed to be a general protein degrading machinery. The polypeptide is ATP-dependent protease subunit HslV (Staphylococcus aureus (strain bovine RF122 / ET3-1)).